The primary structure comprises 170 residues: Protein ECM34 (170 aa).

N-linked (GlcNAc...) asparagine glycosylation occurs at Asn45. Helical transmembrane passes span 51 to 71 (IWLL…GIGG) and 98 to 118 (TIVI…FKMY).

The protein belongs to the DUP/COS family.

Its subcellular location is the membrane. In terms of biological role, may be involved in cell wall organization and biogenesis. This is Protein ECM34 (ECM34) from Saccharomyces cerevisiae (strain ATCC 204508 / S288c) (Baker's yeast).